Reading from the N-terminus, the 439-residue chain is Aspartate--tRNA(Asp/Asn) ligase (439 aa).

Position 177 (Glu-177) interacts with L-aspartate. The segment at Gln-199–Lys-202 is aspartate. Arg-221 provides a ligand contact to L-aspartate. Residues Arg-221–Glu-223, Arg-229–Leu-231, and Glu-362 contribute to the ATP site. Mg(2+) is bound by residues Glu-362 and Ser-365. Residues Ser-365 and Arg-369 each contribute to the L-aspartate site. Residue Gly-410–Arg-413 coordinates ATP.

The protein belongs to the class-II aminoacyl-tRNA synthetase family. Type 2 subfamily. In terms of assembly, homodimer. Mg(2+) is required as a cofactor.

The protein resides in the cytoplasm. It carries out the reaction tRNA(Asx) + L-aspartate + ATP = L-aspartyl-tRNA(Asx) + AMP + diphosphate. In terms of biological role, aspartyl-tRNA synthetase with relaxed tRNA specificity since it is able to aspartylate not only its cognate tRNA(Asp) but also tRNA(Asn). Reaction proceeds in two steps: L-aspartate is first activated by ATP to form Asp-AMP and then transferred to the acceptor end of tRNA(Asp/Asn). In Methanosphaera stadtmanae (strain ATCC 43021 / DSM 3091 / JCM 11832 / MCB-3), this protein is Aspartate--tRNA(Asp/Asn) ligase.